The chain runs to 253 residues: RNA polymerase sigma factor SigI6 (253 aa).

A Polymerase core binding motif is present at residues Glu63–Ile76. The segment at residues Thr203 to Lys222 is a DNA-binding region (H-T-H motif).

Belongs to the sigma-70 factor family. SigI subfamily. As to quaternary structure, interacts with RsgI6.

It is found in the cytoplasm. With respect to regulation, negatively regulated by the anti-sigma-I factor RsgI6. Binding of the polysaccharide substrate to RsgI6 may lead to the release and activation of SigI6. Its function is as follows. Sigma factors are initiation factors that promote the attachment of RNA polymerase to specific initiation sites and are then released. This sigma factor is involved in regulation of cellulosomal genes via an external polysaccharide-sensing mechanism. Recognizes the predicted promoters associated with sigI6 itself, xyn11B, xyn10D, xyn10Z, xyn10Y, cel9V, cseP, sigI1, cipA, and rsgI5. The chain is RNA polymerase sigma factor SigI6 from Acetivibrio thermocellus (strain ATCC 27405 / DSM 1237 / JCM 9322 / NBRC 103400 / NCIMB 10682 / NRRL B-4536 / VPI 7372) (Clostridium thermocellum).